A 389-amino-acid polypeptide reads, in one-letter code: MWIKGKAYYEGEIKEICINFDRSIKEIRANCKPDMTFTNEELILPASVDLHVHVRGAQLSYKETVATATSEAVYGGVGVIVDMPNTVPYINTPERIKERLREFQLYSRTDYGIYSGVSKEVEEIDKLPIAGYKIYPEDLEKEETRYVLEKSKKLKILHPEMPFVSKIERSLRRSYWMETAAINLVKGNMHITHITNFETLQLAKSMGFTTDITAHHLVVDGERDCISKVNPPIRDYVTRLKLFLKGLFEVDCIASDHAPHSKEEKRMNFDLCPPGIAGVSFSTPYIYSLMFKGLISIDRAVSLLSGNPSRILNIPTGKIKEGYRANFTVIKRENWRYTTKFSKVTETPMDGFSLDAKVTNVIVEGKLAFDGENVYPIRGVNIFDSSSRS.

Residues His51 and His53 each contribute to the Zn(2+) site. Substrate-binding positions include 53 to 55 and Asn85; that span reads HVR. Zn(2+)-binding residues include Lys133, His158, His193, and Asp256. N6-carboxylysine is present on Lys133. The active site involves Asp256. Substrate is bound by residues His260 and 274–275; that span reads PG.

This sequence belongs to the metallo-dependent hydrolases superfamily. DHOase family. Class I DHOase subfamily. Zn(2+) serves as cofactor.

The catalysed reaction is (S)-dihydroorotate + H2O = N-carbamoyl-L-aspartate + H(+). Its pathway is pyrimidine metabolism; UMP biosynthesis via de novo pathway; (S)-dihydroorotate from bicarbonate: step 3/3. Catalyzes the reversible cyclization of carbamoyl aspartate to dihydroorotate. In Sulfolobus acidocaldarius (strain ATCC 33909 / DSM 639 / JCM 8929 / NBRC 15157 / NCIMB 11770), this protein is Dihydroorotase.